A 222-amino-acid chain; its full sequence is 7-carboxy-7-deazaguanine synthase (222 aa).

Residues 16–18 (LQG) and arginine 31 contribute to the substrate site. Residues 22-222 (NLGRPAVFVR…IMAWGNARGK (201 aa)) form the Radical SAM core domain. Positions 35, 39, and 42 each coordinate [4Fe-4S] cluster. Residue threonine 44 coordinates Mg(2+). A substrate-binding site is contributed by threonine 77. S-adenosyl-L-methionine contacts are provided by residues glycine 79 and 126-128 (SPK).

The protein belongs to the radical SAM superfamily. 7-carboxy-7-deazaguanine synthase family. As to quaternary structure, homodimer. It depends on [4Fe-4S] cluster as a cofactor. The cofactor is S-adenosyl-L-methionine. Requires Mg(2+) as cofactor.

It carries out the reaction 6-carboxy-5,6,7,8-tetrahydropterin + H(+) = 7-carboxy-7-deazaguanine + NH4(+). The protein operates within purine metabolism; 7-cyano-7-deazaguanine biosynthesis. Catalyzes the complex heterocyclic radical-mediated conversion of 6-carboxy-5,6,7,8-tetrahydropterin (CPH4) to 7-carboxy-7-deazaguanine (CDG), a step common to the biosynthetic pathways of all 7-deazapurine-containing compounds. In Pyrobaculum aerophilum (strain ATCC 51768 / DSM 7523 / JCM 9630 / CIP 104966 / NBRC 100827 / IM2), this protein is 7-carboxy-7-deazaguanine synthase.